The primary structure comprises 2382 residues: Nonribosomal peptide synthetase chyA (2382 aa).

Positions 204–607 are adenylation 1; sequence QKCATQPESI…LGRKDHQVKI (404 aa). The region spanning 745–821 is the Carrier 1 domain; the sequence is TPTTQNQRIL…DMASVLVKDH (77 aa). Residue serine 782 is modified to O-(pantetheine 4'-phosphoryl)serine. The segment at 857–1269 is condensation 1; that stretch reads EDVYPCTHMQ…LVPPEDMATL (413 aa). The tract at residues 1294-1687 is adenylation 2; the sequence is GQPDTLAIHS…VGRKDDQVKL (394 aa). In terms of domain architecture, Carrier 2 spans 1833-1909; that stretch reads VPVSIHGRKV…GLSLKCATEN (77 aa). Serine 1870 bears the O-(pantetheine 4'-phosphoryl)serine mark. Residues 1967–2373 are condensation 2; it reads MTLHNFYSRY…FSDVIESLAS (407 aa).

The protein belongs to the NRP synthetase family.

It functions in the pathway pigment biosynthesis. In terms of biological role, nonribosomal peptide synthetase; part of the gene cluster that mediates the biosynthesis of the yellow pigment chrysogine. the NRPS chyA mediates the condensation of anthranilic acid and alanine into the intermediate 2-(2-aminopropanamido)benzoic acid. The remainder of the pathway is highly branched yielding at least 13 chrysogine-related compounds. The malonyl transferase chyE converts 2-(2-aminopropanamido)benzoic acid and 2-(2-aminopropanamido)benzamidine into 2-(2-(2-carboxyacetamido)propanamido)benzoic acid and 3-((1-((2-carbamoylphenyl)amino)-1-oxopropan-2-yl)amino)-3-oxopropanoic acid, respectively. ChyD is an amidase, being responsible for the amidation of the carboxylic acid moiety of 2-(2-aminopropanamido)benzoic acid, 2-(2-(2-carboxyacetamido)propanamido)benzoic acid and 2-(2-((4-amino-1-carboxy-4-oxobutyl)amino)propanamido)benzoic acid. ChyC is involved in the same reactions as ChyD, but plays a more minor role in the amidation reactions compared to chyD. The oxidoreductases chyH and chyM are involved in oxidation reactions that form N-pyruvoylanthranilamide from 2-(2-aminopropanamido)benzamidine and (1-((2-carbamoylphenyl)amino)-1-oxopropan-2-yl)glutamine, respectively. N-pyruvoylanthranilamide is further converted via two further branches in the pathway, yielding chrysogine and additional chrysogine-related coumpounds. Chrysogine is likely formed by a spontaneous ring closure from N-pyruvoylanthranilamide. The sequence is that of Nonribosomal peptide synthetase chyA from Penicillium rubens (strain ATCC 28089 / DSM 1075 / NRRL 1951 / Wisconsin 54-1255) (Penicillium chrysogenum).